The primary structure comprises 405 residues: Prostaglandin E2 receptor EP1 subtype (405 aa).

At 1–39 (MSPYGLNLSLVDEATTCVTPRVPNTSVVLPTGGNGTSPA) the chain is on the extracellular side. Residues asparagine 7, asparagine 24, and asparagine 34 are each glycosylated (N-linked (GlcNAc...) asparagine). A helical membrane pass occupies residues 40–62 (LPIFSMTLGAVSNVLALALLAQV). Residues 63-80 (AGRLRRRRSTATFLLFVA) lie on the Cytoplasmic side of the membrane. A helical transmembrane segment spans residues 81–99 (SLLAIDLAGHVIPGALVLR). At 100–113 (LYTAGRAPAGGACH) the chain is on the extracellular side. A disulfide bridge connects residues cysteine 112 and cysteine 190. A helical membrane pass occupies residues 114–135 (FLGGCMVFFGLCPLLLGCGMAV). At 136–157 (ERCVGVTQPLIHAARVSVARAR) the chain is on the cytoplasmic side. A helical transmembrane segment spans residues 158-179 (LALALLAAMALAVALLPLVHVG). Residues 180–202 (HYELQYPGTWCFISLGPPGGWRQ) are Extracellular-facing. The chain crosses the membrane as a helical span at residues 203–228 (ALLAGLFAGLGLAALLAALVCNTLSG). At 229–301 (LALLRARWRR…HAHDVEMVGQ (73 aa)) the chain is on the cytoplasmic side. Residues 302-323 (LVGIMVVSCICWSPLLVLVVLA) traverse the membrane as a helical segment. The Extracellular portion of the chain corresponds to 324–337 (IGGWNSNSLQRPLF). A helical transmembrane segment spans residues 338–357 (LAVRLASWNQILDPWVYILL). Residues 358-405 (RQAMLRQLLRLLPLRVSAKGGPTELSLTKSAWEASSLRSSRHSGFSHL) are Cytoplasmic-facing.

The protein belongs to the G-protein coupled receptor 1 family. In terms of processing, phosphorylated. Highly abundant in kidney and lung. Found in a lesser extent in spleen, colon, and thymus. Also expressed in uterine myometrium and endometrium.

It is found in the cell membrane. In terms of biological role, receptor for prostaglandin E2 (PGE2). The activity of this receptor is mediated by G(q) proteins which activate a phosphatidylinositol-calcium second messenger system. May play a role as an important modulator of renal function. Implicated the smooth muscle contractile response to PGE2 in various tissues. Isoform 1 and isoform 2 have identical ligand binding properties, but isoform 2 lacks coupling to calcium mobilization and may therefore attenuate the action of PGE2 on tissues. The protein is Prostaglandin E2 receptor EP1 subtype (Ptger1) of Rattus norvegicus (Rat).